We begin with the raw amino-acid sequence, 337 residues long: Glycerol-3-phosphate dehydrogenase [NAD(P)+] (337 aa).

Residues Ser11, Trp12, Arg32, and Lys109 each contribute to the NADPH site. Residues Lys109, Gly140, and Ser142 each contribute to the sn-glycerol 3-phosphate site. NADPH is bound at residue Ala144. Residues Lys195, Asp248, Ser258, Arg259, and Asn260 each coordinate sn-glycerol 3-phosphate. Lys195 serves as the catalytic Proton acceptor. Arg259 contacts NADPH. Val283 and Glu285 together coordinate NADPH.

It belongs to the NAD-dependent glycerol-3-phosphate dehydrogenase family.

It localises to the cytoplasm. It catalyses the reaction sn-glycerol 3-phosphate + NAD(+) = dihydroxyacetone phosphate + NADH + H(+). The catalysed reaction is sn-glycerol 3-phosphate + NADP(+) = dihydroxyacetone phosphate + NADPH + H(+). Its pathway is membrane lipid metabolism; glycerophospholipid metabolism. Functionally, catalyzes the reduction of the glycolytic intermediate dihydroxyacetone phosphate (DHAP) to sn-glycerol 3-phosphate (G3P), the key precursor for phospholipid synthesis. The polypeptide is Glycerol-3-phosphate dehydrogenase [NAD(P)+] (Limosilactobacillus fermentum (strain NBRC 3956 / LMG 18251) (Lactobacillus fermentum)).